The following is a 319-amino-acid chain: Taste receptor type 2 member 30 (319 aa).

Residue methionine 1 is a topological domain, extracellular. The helical transmembrane segment at 2–22 (ITFLPIIFSILIVVIFVIGNF) threads the bilayer. The Cytoplasmic segment spans residues 23 to 46 (ANGFIALVNSIEWVKRQKISFVDQ). A helical transmembrane segment spans residues 47-67 (ILTALAVSRVGLLWVLLLHWY). The Extracellular segment spans residues 68-86 (ATQLNPAFYSVEVRITVYN). The helical transmembrane segment at 87 to 107 (VWAVTNHFSSWLATSLSMFYL) threads the bilayer. The Cytoplasmic segment spans residues 108–126 (LKIANFSNLIFLRIKRRVK). The helical transmembrane segment at 127–147 (SVVLVILLGPLLFLVCHLFVI) threads the bilayer. Topologically, residues 148 to 178 (NMDETIWTKEYEGNMTWKIKLRSAMYHSNMT) are extracellular. 2 N-linked (GlcNAc...) asparagine glycosylation sites follow: asparagine 161 and asparagine 176. A helical transmembrane segment spans residues 179–199 (LTMLANFVPLTLTLISFLLLI). Over 200–229 (CSLCKHLKKMQLHGKGSQDPSTKVHIKALQ) the chain is Cytoplasmic. Residues 230–250 (TVTSFLLLCAIYFLSMIISVC) form a helical membrane-spanning segment. At 251-259 (NLGRLEKQP) the chain is on the extracellular side. Residues 260 to 280 (VFMFCQAIIFSYPSTHPFILI) traverse the membrane as a helical segment. The Cytoplasmic segment spans residues 281 to 319 (LGNKKLKQIFLSVLWHVRYWVKDRSLRLHRFTRAALCKG).

The protein belongs to the G-protein coupled receptor T2R family.

The protein localises to the membrane. Receptor that may play a role in the perception of bitterness and is gustducin-linked. May play a role in sensing the chemical composition of the gastrointestinal content. The activity of this receptor may stimulate alpha gustducin, mediate PLC-beta-2 activation and lead to the gating of TRPM5. The polypeptide is Taste receptor type 2 member 30 (TAS2R30) (Pan troglodytes (Chimpanzee)).